Reading from the N-terminus, the 248-residue chain is Metallo-beta-lactamase type 2 (248 aa).

The first 21 residues, 1–21 (MKGLKGLLVLALGFTGLQVFG), serve as a signal peptide directing secretion. The Zn(2+) site is built by His97, His99, Asp101, His160, and Cys179. Lys182 is a binding site for substrate. His221 provides a ligand contact to Zn(2+).

This sequence belongs to the metallo-beta-lactamase superfamily. Class-B beta-lactamase family. In terms of assembly, monomer. The cofactor is Zn(2+).

The protein localises to the periplasm. The catalysed reaction is a beta-lactam + H2O = a substituted beta-amino acid. Its function is as follows. Confers resistance to the different beta-lactams antibiotics (penicillin, cephalosporin and carbapenem) via the hydrolysis of the beta-lactam ring. This Elizabethkingia meningoseptica (Chryseobacterium meningosepticum) protein is Metallo-beta-lactamase type 2 (blaB7).